The chain runs to 480 residues: Coronin-2B (480 aa).

WD repeat units follow at residues 29 to 77, 78 to 127, 128 to 170, 171 to 212, 213 to 259, 260 to 305, and 306 to 345; these read HCFD…GRIE, PNYP…RNMT, EALL…LDVG, EPVK…PRSG, RVLQ…EDLS, MPLI…TEKP, and YLSYLMEFRSPAPQKGLGVMPKHGLDVSACEVFRFYKLVT. Positions 436 to 479 form a coiled coil; the sequence is NELLRMFFRQQDEIRRLKEELAQKDIRIRQLQLELKNLRNSPKN.

It belongs to the WD repeat coronin family. As to quaternary structure, binds to F-actin and to vinculin. In terms of tissue distribution, expressed predominantly in brain.

It localises to the cytoplasm. The protein localises to the cytoskeleton. Functionally, may play a role in the reorganization of neuronal actin structure. The sequence is that of Coronin-2B (CORO2B) from Homo sapiens (Human).